A 148-amino-acid chain; its full sequence is MSRGDGYPKNIFLLCRDSGVPFEDLRLQCVFCTKELTSPELAAFCIRELNVVWKSGAPYGACARCLLFEGIKRRLKYWQYSCFVEGVEAETNESIYTQLIRCYMCHKPLVREEKDKHRNEKRRLHKISGYWRGSCLYCWSRCMGQSPR.

Zinc fingers lie at residues 29-65 (CVFC…CARC) and 102-138 (CYMC…CLYC).

It belongs to the papillomaviridae E6 protein family. In terms of assembly, forms homodimers. Interacts with ubiquitin-protein ligase UBE3A/E6-AP; this interaction stimulates UBE3A ubiquitin activity. Interacts with host TP53 and EP300; this interaction inhibits TP53 activity.

The protein resides in the host cytoplasm. Its subcellular location is the host nucleus. Plays a major role in the induction and maintenance of cellular transformation. E6 associates with host UBE3A/E6-AP ubiquitin-protein ligase and modulates its activity. Sequesters tumor suppressor TP53 in the host cytoplasm and modulates its activity by interacting with host EP300 that results in the reduction of TP53 acetylation and activation. In turn, apoptosis induced by DNA damage is inhibited. E6 also protects host keratinocytes from apoptosis by mediating the degradation of host BAK1. May also inhibit host immune response. This chain is Protein E6, found in Homo sapiens (Human).